The chain runs to 267 residues: Type III pantothenate kinase (267 aa).

6 to 13 (DSGNSRLK) lines the ATP pocket. Substrate is bound by residues Tyr-96 and 103–106 (GADR). The active-site Proton acceptor is the Asp-105. Residue Thr-131 participates in ATP binding. Substrate is bound at residue Thr-181.

It belongs to the type III pantothenate kinase family. Homodimer. It depends on NH4(+) as a cofactor. The cofactor is K(+).

The protein resides in the cytoplasm. It carries out the reaction (R)-pantothenate + ATP = (R)-4'-phosphopantothenate + ADP + H(+). It functions in the pathway cofactor biosynthesis; coenzyme A biosynthesis; CoA from (R)-pantothenate: step 1/5. Catalyzes the phosphorylation of pantothenate (Pan), the first step in CoA biosynthesis. Its function is as follows. Activates transcription of the pertussis toxin operon in a BvgAS-dependent manner. May interact with the alpha subunit of RNA polymerase. The sequence is that of Type III pantothenate kinase (coaX) from Bordetella pertussis (strain Tohama I / ATCC BAA-589 / NCTC 13251).